We begin with the raw amino-acid sequence, 506 residues long: Gamma-aminobutyric acid receptor subunit epsilon (506 aa).

The N-terminal stretch at 1–17 is a signal peptide; sequence MLPKVLLMLLNMFLALQ. Over 18–277 the chain is Extracellular; sequence WRVGPHIKLE…MTFFFNVSRR (260 aa). A disordered region spans residues 32–65; that stretch reads AQDKVVFGPQPQPSGKKLPARETELTADHTTERP. The segment covering 50–65 has biased composition (basic and acidic residues); sequence PARETELTADHTTERP. The N-linked (GlcNAc...) asparagine glycan is linked to N135. A disulfide bond links C196 and C210. N-linked (GlcNAc...) asparagine glycosylation is present at N253. Residues 278–298 form a helical membrane-spanning segment; it reads FGFIVFQNYIPSSVTTMLSWV. The Cytoplasmic portion of the chain corresponds to 299–308; the sequence is SFWIKIEAAA. The helical transmembrane segment at 309 to 328 threads the bilayer; it reads ARASVGVSSVLTMATLGTFS. Over 329–344 the chain is Extracellular; that stretch reads RKNFPRVSYLTALDFY. The helical transmembrane segment at 345-365 threads the bilayer; it reads IAICFVLCFCTLLEFTVLNFL. At 366 to 485 the chain is on the cytoplasmic side; sequence TYNNIERQAS…HVYRLDNYSR (120 aa). Residues 486 to 506 form a helical membrane-spanning segment; sequence VLFPITFFFFNVVYWVICLNL.

Belongs to the ligand-gated ion channel (TC 1.A.9) family. Gamma-aminobutyric acid receptor (TC 1.A.9.5) subfamily. GABRE sub-subfamily. In terms of assembly, heteropentamer, formed by a combination of alpha (GABRA1-6), beta (GABRB1-3), gamma (GABRG1-3), delta (GABRD), epsilon (GABRE), rho (GABRR1-3), pi (GABRP) and theta (GABRQ) chains, each subunit exhibiting distinct physiological and pharmacological properties. As to expression, expressed in brain and heart. Strongly expressed in locus ceruleus from the first postnatal day. Weakly expressed in other brainstem nuclei and in the hypothalamus. Found in the cerebral cortex of pups.

Its subcellular location is the cell membrane. It is found in the postsynaptic cell membrane. It catalyses the reaction chloride(in) = chloride(out). Functionally, epsilon subunit of the heteropentameric ligand-gated chloride channel gated by gamma-aminobutyric acid (GABA), a major inhibitory neurotransmitter in the brain. GABA-gated chloride channels, also named GABA(A) receptors (GABAAR), consist of five subunits arranged around a central pore and contain GABA active binding site(s) located at the alpha and beta subunit interfaces. When activated by GABA, GABAARs selectively allow the flow of chloride anions across the cell membrane down their electrochemical gradient. GABARs containing epsilon subunit may also permit spontaneous chloride channel activity while preserving the structural information required for GABA-gated openings. GABARs containing epsilon subunit may regulate cardiac function. The sequence is that of Gamma-aminobutyric acid receptor subunit epsilon from Rattus norvegicus (Rat).